Here is a 173-residue protein sequence, read N- to C-terminus: Transmembrane protein 278 (173 aa).

A compositionally biased stretch (acidic residues) spans 1–14 (MSEQERETEEDEGV). A disordered region spans residues 1–25 (MSEQERETEEDEGVASDTAPMLPRR). The next 3 helical transmembrane spans lie at 31–51 (HISV…VLSG), 53–73 (ALVG…LVLL), and 107–127 (AALI…AAAA). The interval 141-165 (DPARTPAPRRPPRSSGDLADGHPDE) is disordered.

The protein belongs to the TMEM88 family.

The protein resides in the membrane. The polypeptide is Transmembrane protein 278 (Tmem278) (Mus musculus (Mouse)).